Reading from the N-terminus, the 92-residue chain is Small ribosomal subunit protein bS20 (92 aa).

The tract at residues 1–23 (MANTTSAKKATRKIARRTDVNKA) is disordered.

Belongs to the bacterial ribosomal protein bS20 family.

Its function is as follows. Binds directly to 16S ribosomal RNA. This Rhizobium leguminosarum bv. trifolii (strain WSM2304) protein is Small ribosomal subunit protein bS20.